Consider the following 429-residue polypeptide: MSIIIKIHARQIFDSRGNPTIEVDVVTENGVLGRAAVPSGASTGEHEAMELRDGGKAYLGKGVLKAVENVNTIIASELLGTSVFEQNLIDKIMIDLDGTPNKSNLGANAILGVSLAAAKAAANELGLPLYRYIGGVSANTLPVPMMNIINGGSHSDAPIAFQEFMIIPVKAASFTQAMQMGTEIFHHLKKVLHDRGLSTAVGDEGGFAPNLAGGTEDALETIKKAVQSAGYTFGDDIMIALDCAASEFYVNGKYDYTKFEGTTGKIRTSEEQADYLAELASKYPIISIEDGMQEDDWAGWKYLTEKIGHKTQLVGDDLFVTNVTRLSRGISEGIANSILVKVNQIGTLTETIAAVNMAHNAGYTSVMSHRSGETEDHTIADLAVALNCGQIKTGSASRSDRMSKYNQLLRIEEELNDVAYFPGAKAFKK.

Gln162 contributes to the (2R)-2-phosphoglycerate binding site. Glu204 functions as the Proton donor in the catalytic mechanism. Mg(2+)-binding residues include Asp242, Glu289, and Asp316. (2R)-2-phosphoglycerate is bound by residues Lys341, Arg370, Ser371, and Lys392. Catalysis depends on Lys341, which acts as the Proton acceptor.

The protein belongs to the enolase family. Mg(2+) is required as a cofactor.

The protein localises to the cytoplasm. It localises to the secreted. The protein resides in the cell surface. The enzyme catalyses (2R)-2-phosphoglycerate = phosphoenolpyruvate + H2O. Its pathway is carbohydrate degradation; glycolysis; pyruvate from D-glyceraldehyde 3-phosphate: step 4/5. Catalyzes the reversible conversion of 2-phosphoglycerate (2-PG) into phosphoenolpyruvate (PEP). It is essential for the degradation of carbohydrates via glycolysis. This is Enolase from Flavobacterium psychrophilum (strain ATCC 49511 / DSM 21280 / CIP 103535 / JIP02/86).